We begin with the raw amino-acid sequence, 146 residues long: Cytochrome c-type biogenesis protein CcmE (146 aa).

The Cytoplasmic portion of the chain corresponds to 1–7 (MQAKHQR). Residues 8-28 (LILGIIALAAVIAAGFLALVA) traverse the membrane as a helical; Signal-anchor for type II membrane protein segment. The Periplasmic segment spans residues 29 to 146 (FKKQAAYFFT…AATQTTLQEK (118 aa)). Heme contacts are provided by His-123 and Tyr-127.

The protein belongs to the CcmE/CycJ family.

The protein resides in the cell inner membrane. In terms of biological role, heme chaperone required for the biogenesis of c-type cytochromes. Transiently binds heme delivered by CcmC and transfers the heme to apo-cytochromes in a process facilitated by CcmF and CcmH. This chain is Cytochrome c-type biogenesis protein CcmE, found in Zymomonas mobilis subsp. mobilis (strain ATCC 31821 / ZM4 / CP4).